The chain runs to 223 residues: MAGNKGRGRAAYTFNIEAVGFSKGEKLPDVVLKPPPLFPDTDYKPVPLKTGEGEEYMLALKQELRETMKRMPYFIETPEERQDIERYSKRYMKVYKEEWIPDWRRLPREMMPRNKCKKAGPKPKKAKDAGKGTPLTNTEDVLKKMEELEKRGDGEKSDEENEEKEGSKEKSKEGDDDDDDDAAEQEEYDEEEQEEENDYINSYFEDGDDFGADSDDNMDEATY.

A disordered region spans residues 110-223 (MMPRNKCKKA…SDDNMDEATY (114 aa)). Residues 114–125 (NKCKKAGPKPKK) show a composition bias toward basic residues. A Phosphothreonine modification is found at threonine 133. Over residues 140–155 (DVLKKMEELEKRGDGE) the composition is skewed to basic and acidic residues. Serine 157 carries the post-translational modification Phosphoserine. A compositionally biased stretch (basic and acidic residues) spans 164–173 (KEGSKEKSKE). 2 stretches are compositionally biased toward acidic residues: residues 174-198 (GDDD…EEND) and 205-223 (EDGD…EATY).

It belongs to the eukaryotic RPC7 RNA polymerase subunit family. In terms of assembly, component of the RNA polymerase III complex consisting of 17 subunits: a ten-subunit horseshoe-shaped catalytic core composed of POLR3A/RPC1, POLR3B/RPC2, POLR1C/RPAC1, POLR1D/RPAC2, POLR3K/RPC10, POLR2E/RPABC1, POLR2F/RPABC2, POLR2H/RPABC3, POLR2K/RPABC4 and POLR2L/RPABC5; a mobile stalk composed of two subunits POLR3H/RPC8 and CRCP/RPC9, protruding from the core and functioning primarily in transcription initiation; and additional subunits homologous to general transcription factors of the RNA polymerase II machinery, POLR3C/RPC3-POLR3F/RPC6-POLR3G/RPC7 heterotrimer required for transcription initiation and POLR3D/RPC4-POLR3E/RPC5 heterodimer involved in both transcription initiation and termination. Directly interacts with POLR3C/RPC62. Also found in a trimeric complex with POLR3C/RPC3 and POLR3GL. As to expression, barely detectable in differentiated tissues. Expressed in embryonic stem cells and in other dividing cells, such as some tumor cell lines.

Its subcellular location is the nucleus. It is found in the cytoplasm. Its function is as follows. DNA-dependent RNA polymerase catalyzes the transcription of DNA into RNA using the four ribonucleoside triphosphates as substrates. Specific peripheric component of RNA polymerase III (Pol III) which synthesizes small non-coding RNAs including 5S rRNA, snRNAs, tRNAs and miRNAs from at least 500 distinct genomic loci. Acts as a long tether that bridges POLR3C/RPC3-POLR3F/RPC6-POLR3G/RPC7 heterotrimer and the mobile stalk of Pol III, coordinating the dynamics of Pol III stalk and clamp modules during the transition from apo to elongation state. Pol III exists as two alternative complexes defined by the mutually exclusive incorporation of subunit POLR3G/RPC7alpha or POLR3GL/RPC7beta. POLR3G/RPC7alpha modulates Pol III transcriptome by specifically enhancing the transcription of snaR-A non-coding RNAs. At resting state, occupies the active site of apo Pol III and keeps Pol III in an autoinhibitory mode, preventing non-specific transcription. Pol III plays a key role in sensing and limiting infection by intracellular bacteria and DNA viruses. Acts as a nuclear and cytosolic DNA sensor involved in innate immune response. Can sense non-self dsDNA that serves as template for transcription into dsRNA. The non-self RNA polymerase III transcripts, such as Epstein-Barr virus-encoded RNAs (EBERs), induce type I interferon and NF-kappa-B through the RIG-I pathway. The protein is DNA-directed RNA polymerase III subunit RPC7 of Homo sapiens (Human).